A 314-amino-acid chain; its full sequence is Small ribosomal subunit biogenesis GTPase RsgA (314 aa).

The tract at residues 1–21 (MKRAPTKQPAKPAARGGERAQ) is disordered. The 162-residue stretch at 85–246 (SDQFKSKLFA…LIDSPGFQEF (162 aa)) folds into the CP-type G domain. GTP contacts are provided by residues 134 to 137 (NKID) and 188 to 196 (GQSGMGKST). Positions 270, 275, 277, and 283 each coordinate Zn(2+).

This sequence belongs to the TRAFAC class YlqF/YawG GTPase family. RsgA subfamily. Monomer. Associates with 30S ribosomal subunit, binds 16S rRNA. Requires Zn(2+) as cofactor.

The protein resides in the cytoplasm. Its function is as follows. One of several proteins that assist in the late maturation steps of the functional core of the 30S ribosomal subunit. Helps release RbfA from mature subunits. May play a role in the assembly of ribosomal proteins into the subunit. Circularly permuted GTPase that catalyzes slow GTP hydrolysis, GTPase activity is stimulated by the 30S ribosomal subunit. This Burkholderia mallei (strain ATCC 23344) protein is Small ribosomal subunit biogenesis GTPase RsgA.